The chain runs to 70 residues: uncharacterized protein (70 aa).

The helical transmembrane segment at 50–70 (FYLLVFFIILWVSREAFFYLI) threads the bilayer.

It belongs to the M.jannaschii MJ0023/MJ0349/MJ1072/MJ1074/MJ1107/MJECL16 family.

The protein resides in the membrane. This is an uncharacterized protein from Methanocaldococcus jannaschii (strain ATCC 43067 / DSM 2661 / JAL-1 / JCM 10045 / NBRC 100440) (Methanococcus jannaschii).